Here is a 227-residue protein sequence, read N- to C-terminus: Ion-translocating oxidoreductase complex subunit E (227 aa).

Transmembrane regions (helical) follow at residues 34–56 (AINAIGLGMTTTLVLTITNTIIS), 68–88 (IPIYMMIISSVVTSIEMLLHA), 91–111 (FNLYQSLGIFIPLIVTNCIIV), 127–147 (FFDGIFIGLGSMFAMFAVGSI), and 181–201 (TIILAVFPPGGFLILGFLIAI).

This sequence belongs to the NqrDE/RnfAE family. As to quaternary structure, the complex is composed of six subunits: RnfA, RnfB, RnfC, RnfD, RnfE and RnfG.

The protein resides in the cell inner membrane. In terms of biological role, part of a membrane-bound complex that couples electron transfer with translocation of ions across the membrane. This Buchnera aphidicola subsp. Acyrthosiphon pisum (strain 5A) protein is Ion-translocating oxidoreductase complex subunit E.